Here is a 427-residue protein sequence, read N- to C-terminus: Isocitrate lyase (427 aa).

Substrate is bound at residue 89–91 (SGW). Asp-150 provides a ligand contact to Mg(2+). Cys-188 (proton acceptor) is an active-site residue. Substrate is bound by residues 189–190 (GH), Arg-225, 310–314 (NCSPS), and Thr-344.

The protein belongs to the isocitrate lyase/PEP mutase superfamily. Isocitrate lyase family. In terms of assembly, homotetramer. The cofactor is Mg(2+).

It catalyses the reaction D-threo-isocitrate = glyoxylate + succinate. It functions in the pathway carbohydrate metabolism; glyoxylate cycle; (S)-malate from isocitrate: step 1/2. Functionally, involved in the metabolic adaptation in response to environmental changes. Catalyzes the reversible formation of succinate and glyoxylate from isocitrate, a key step of the glyoxylate cycle, which operates as an anaplerotic route for replenishing the tricarboxylic acid cycle during growth on fatty acid substrates. The polypeptide is Isocitrate lyase (aceA) (Halalkalibacterium halodurans (strain ATCC BAA-125 / DSM 18197 / FERM 7344 / JCM 9153 / C-125) (Bacillus halodurans)).